A 432-amino-acid polypeptide reads, in one-letter code: Anaerobic glycerol-3-phosphate dehydrogenase subunit B (432 aa).

The protein belongs to the anaerobic G-3-P dehydrogenase subunit B family. Composed of a catalytic GlpA/B dimer and of membrane bound GlpC. FMN serves as cofactor.

The catalysed reaction is a quinone + sn-glycerol 3-phosphate = dihydroxyacetone phosphate + a quinol. It functions in the pathway polyol metabolism; glycerol degradation via glycerol kinase pathway; glycerone phosphate from sn-glycerol 3-phosphate (anaerobic route): step 1/1. Functionally, conversion of glycerol 3-phosphate to dihydroxyacetone. Uses fumarate or nitrate as electron acceptor. This chain is Anaerobic glycerol-3-phosphate dehydrogenase subunit B, found in Haemophilus influenzae (strain PittEE).